Consider the following 72-residue polypeptide: MSKDDVIEMQGTVLEALPNAMFEVELESGHKILAHISGKLRMNFIRILPGDKVTVELSPYDLTRGRITWRAK.

The 72-residue stretch at 1-72 folds into the S1-like domain; that stretch reads MSKDDVIEMQ…TRGRITWRAK (72 aa).

Belongs to the IF-1 family. Component of the 30S ribosomal translation pre-initiation complex which assembles on the 30S ribosome in the order IF-2 and IF-3, IF-1 and N-formylmethionyl-tRNA(fMet); mRNA recruitment can occur at any time during PIC assembly.

The protein resides in the cytoplasm. One of the essential components for the initiation of protein synthesis. Stabilizes the binding of IF-2 and IF-3 on the 30S subunit to which N-formylmethionyl-tRNA(fMet) subsequently binds. Helps modulate mRNA selection, yielding the 30S pre-initiation complex (PIC). Upon addition of the 50S ribosomal subunit IF-1, IF-2 and IF-3 are released leaving the mature 70S translation initiation complex. The sequence is that of Translation initiation factor IF-1 from Clostridium kluyveri (strain ATCC 8527 / DSM 555 / NBRC 12016 / NCIMB 10680 / K1).